Consider the following 187-residue polypeptide: Threonylcarbamoyl-AMP synthase (187 aa).

One can recognise a YrdC-like domain in the interval 3-187 (QVLPADAAEL…ARSGTVIREG (185 aa)).

The protein belongs to the SUA5 family. TsaC subfamily.

Its subcellular location is the cytoplasm. The catalysed reaction is L-threonine + hydrogencarbonate + ATP = L-threonylcarbamoyladenylate + diphosphate + H2O. Its function is as follows. Required for the formation of a threonylcarbamoyl group on adenosine at position 37 (t(6)A37) in tRNAs that read codons beginning with adenine. Catalyzes the conversion of L-threonine, HCO(3)(-)/CO(2) and ATP to give threonylcarbamoyl-AMP (TC-AMP) as the acyladenylate intermediate, with the release of diphosphate. This chain is Threonylcarbamoyl-AMP synthase, found in Shewanella pealeana (strain ATCC 700345 / ANG-SQ1).